We begin with the raw amino-acid sequence, 452 residues long: FAD transporter (452 aa).

12 consecutive transmembrane segments (helical) span residues Leu-21 to Ile-41, Leu-49 to Val-69, Ala-96 to Glu-116, Leu-131 to Val-151, Met-167 to Ile-187, Ala-199 to Ile-219, Ala-248 to Asp-270, Leu-283 to Ala-303, Phe-324 to Ala-344, Leu-357 to Phe-377, Val-392 to Ile-412, and Gly-417 to Ala-437.

The protein belongs to the multi antimicrobial extrusion (MATE) (TC 2.A.66.1) family.

It localises to the cell inner membrane. Its function is as follows. Flavin adenine dinucleotide (FAD) transporter that facilitates export of flavin electron shuttles. This chain is FAD transporter, found in Shewanella oneidensis (strain ATCC 700550 / JCM 31522 / CIP 106686 / LMG 19005 / NCIMB 14063 / MR-1).